The chain runs to 208 residues: Putative dioxygenase RF_0617 (208 aa).

The protein belongs to the intradiol ring-cleavage dioxygenase family.

The protein is Putative dioxygenase RF_0617 of Rickettsia felis (strain ATCC VR-1525 / URRWXCal2) (Rickettsia azadi).